Reading from the N-terminus, the 374-residue chain is UDP-N-acetylglucosamine--N-acetylmuramyl-(pentapeptide) pyrophosphoryl-undecaprenol N-acetylglucosamine transferase (374 aa).

UDP-N-acetyl-alpha-D-glucosamine-binding positions include 13 to 15, asparagine 124, arginine 165, serine 193, and glutamine 294; that span reads TGG.

It belongs to the glycosyltransferase 28 family. MurG subfamily.

It is found in the cell inner membrane. The catalysed reaction is di-trans,octa-cis-undecaprenyl diphospho-N-acetyl-alpha-D-muramoyl-L-alanyl-D-glutamyl-meso-2,6-diaminopimeloyl-D-alanyl-D-alanine + UDP-N-acetyl-alpha-D-glucosamine = di-trans,octa-cis-undecaprenyl diphospho-[N-acetyl-alpha-D-glucosaminyl-(1-&gt;4)]-N-acetyl-alpha-D-muramoyl-L-alanyl-D-glutamyl-meso-2,6-diaminopimeloyl-D-alanyl-D-alanine + UDP + H(+). Its pathway is cell wall biogenesis; peptidoglycan biosynthesis. Functionally, cell wall formation. Catalyzes the transfer of a GlcNAc subunit on undecaprenyl-pyrophosphoryl-MurNAc-pentapeptide (lipid intermediate I) to form undecaprenyl-pyrophosphoryl-MurNAc-(pentapeptide)GlcNAc (lipid intermediate II). The protein is UDP-N-acetylglucosamine--N-acetylmuramyl-(pentapeptide) pyrophosphoryl-undecaprenol N-acetylglucosamine transferase of Rhizobium leguminosarum bv. trifolii (strain WSM2304).